A 140-amino-acid chain; its full sequence is Large ribosomal subunit protein uL11 (140 aa).

Belongs to the universal ribosomal protein uL11 family. As to quaternary structure, part of the ribosomal stalk of the 50S ribosomal subunit. Interacts with L10 and the large rRNA to form the base of the stalk. L10 forms an elongated spine to which L12 dimers bind in a sequential fashion forming a multimeric L10(L12)X complex. In terms of processing, one or more lysine residues are methylated.

In terms of biological role, forms part of the ribosomal stalk which helps the ribosome interact with GTP-bound translation factors. In Pelobacter propionicus (strain DSM 2379 / NBRC 103807 / OttBd1), this protein is Large ribosomal subunit protein uL11.